Consider the following 484-residue polypeptide: Glutamyl-tRNA(Gln) amidotransferase subunit A (484 aa).

Catalysis depends on charge relay system residues K78 and S153. The Acyl-ester intermediate role is filled by S177.

This sequence belongs to the amidase family. GatA subfamily. As to quaternary structure, heterotrimer of A, B and C subunits.

The enzyme catalyses L-glutamyl-tRNA(Gln) + L-glutamine + ATP + H2O = L-glutaminyl-tRNA(Gln) + L-glutamate + ADP + phosphate + H(+). Functionally, allows the formation of correctly charged Gln-tRNA(Gln) through the transamidation of misacylated Glu-tRNA(Gln) in organisms which lack glutaminyl-tRNA synthetase. The reaction takes place in the presence of glutamine and ATP through an activated gamma-phospho-Glu-tRNA(Gln). The sequence is that of Glutamyl-tRNA(Gln) amidotransferase subunit A from Thermodesulfovibrio yellowstonii (strain ATCC 51303 / DSM 11347 / YP87).